A 208-amino-acid chain; its full sequence is Putative 3-methyladenine DNA glycosylase (208 aa).

It belongs to the DNA glycosylase MPG family.

The protein is Putative 3-methyladenine DNA glycosylase of Lactobacillus delbrueckii subsp. bulgaricus (strain ATCC 11842 / DSM 20081 / BCRC 10696 / JCM 1002 / NBRC 13953 / NCIMB 11778 / NCTC 12712 / WDCM 00102 / Lb 14).